We begin with the raw amino-acid sequence, 105 residues long: Gastrin/cholecystokinin-like peptide (105 aa).

Positions 1 to 20 are cleaved as a signal peptide; the sequence is MKTKVFLGLILSAAVTACLC. The propeptide occupies 21–38; that stretch reads RPAAKAPGGSHRPTSSLA. The disordered stretch occupies residues 24–51; sequence AKAPGGSHRPTSSLARRDWPEPPSQEQQ. Sulfotyrosine is present on tyrosine 87. Phenylalanine 93 is modified (phenylalanine amide). The propeptide occupies 97 to 105; sequence STEDAADAA.

It belongs to the gastrin/cholecystokinin family.

The protein resides in the secreted. Functionally, potent stimulus of gastric acid, but not of pancreatic secretion. In Gallus gallus (Chicken), this protein is Gastrin/cholecystokinin-like peptide.